A 189-amino-acid polypeptide reads, in one-letter code: Vacuolar iron transporter homolog 2 (189 aa).

Residues 1 to 10 (MARAQWLRAA) lie on the Cytoplasmic side of the membrane. A helical transmembrane segment spans residues 11-31 (VLGANDGLVSVASLMIGIGAV). The Vacuolar segment spans residues 32–38 (NENNKAM). Residues 39 to 59 (LVSGLAGLVAGACSMAIGEFV) form a helical membrane-spanning segment. Residues 60-97 (SVYAQYDIEVTQIERDGDIDGADAAAAREKLPSPTQAA) lie on the Cytoplasmic side of the membrane. Residues 98 to 118 (FASALAFAIGGLLPLLTSGFI) form a helical membrane-spanning segment. Residues 119-124 (KPWGPR) are Vacuolar-facing. Residues 125–145 (VGVVCAASSVGLAGFGAAGGY) traverse the membrane as a helical segment. Residues 146–159 (LGGANMVRSGTRVL) lie on the Cytoplasmic side of the membrane. The chain crosses the membrane as a helical span at residues 160 to 180 (LGGWLAMLITYAVLRLFATIF). The Vacuolar portion of the chain corresponds to 181–189 (HGMNISSSA).

Belongs to the CCC1 family.

The protein localises to the vacuole membrane. It catalyses the reaction Fe(2+)(in) = Fe(2+)(out). Its function is as follows. Probable vacuolar iron transporter that may be involved in the regulation of iron distribution throughout the plant. This Oryza sativa subsp. japonica (Rice) protein is Vacuolar iron transporter homolog 2.